A 245-amino-acid chain; its full sequence is Phosphoadenosine 5'-phosphosulfate reductase (245 aa).

Cys-239 functions as the Nucleophile; cysteine thiosulfonate intermediate in the catalytic mechanism.

The protein belongs to the PAPS reductase family. CysH subfamily.

Its subcellular location is the cytoplasm. The enzyme catalyses [thioredoxin]-disulfide + sulfite + adenosine 3',5'-bisphosphate + 2 H(+) = [thioredoxin]-dithiol + 3'-phosphoadenylyl sulfate. It participates in sulfur metabolism; hydrogen sulfide biosynthesis; sulfite from sulfate: step 3/3. Functionally, catalyzes the formation of sulfite from phosphoadenosine 5'-phosphosulfate (PAPS) using thioredoxin as an electron donor. This Baumannia cicadellinicola subsp. Homalodisca coagulata protein is Phosphoadenosine 5'-phosphosulfate reductase.